A 265-amino-acid chain; its full sequence is Ribonuclease 3 (265 aa).

Residues 34 to 157 (LAVLTRKLGY…LIGAIYLDSQ (124 aa)) form the RNase III domain. E70 contacts Mg(2+). Residue D74 is part of the active site. Mg(2+) is bound by residues D143 and E146. The active site involves E146. One can recognise a DRBM domain in the interval 185 to 256 (DAKSRLQEWL…AELMINQLHK (72 aa)).

Belongs to the ribonuclease III family. Homodimer. Requires Mg(2+) as cofactor.

It localises to the cytoplasm. It catalyses the reaction Endonucleolytic cleavage to 5'-phosphomonoester.. Digests double-stranded RNA. Involved in the processing of primary rRNA transcript to yield the immediate precursors to the large and small rRNAs (23S and 16S). Processes some mRNAs, and tRNAs when they are encoded in the rRNA operon. Processes pre-crRNA and tracrRNA of type II CRISPR loci if present in the organism. The sequence is that of Ribonuclease 3 from Psychrobacter arcticus (strain DSM 17307 / VKM B-2377 / 273-4).